Reading from the N-terminus, the 670-residue chain is tRNA 5-methylaminomethyl-2-thiouridine biosynthesis bifunctional protein MnmC (670 aa).

Residues 1–242 (MTFSVQHAEI…KRECLSGLKI (242 aa)) form a tRNA (mnm(5)s(2)U34)-methyltransferase region. Residues 269 to 670 (IGGGIASLCA…KKWLKGSKVE (402 aa)) are FAD-dependent cmnm(5)s(2)U34 oxidoreductase.

This sequence in the N-terminal section; belongs to the methyltransferase superfamily. tRNA (mnm(5)s(2)U34)-methyltransferase family. The protein in the C-terminal section; belongs to the DAO family. It depends on FAD as a cofactor.

The protein localises to the cytoplasm. The enzyme catalyses 5-aminomethyl-2-thiouridine(34) in tRNA + S-adenosyl-L-methionine = 5-methylaminomethyl-2-thiouridine(34) in tRNA + S-adenosyl-L-homocysteine + H(+). Functionally, catalyzes the last two steps in the biosynthesis of 5-methylaminomethyl-2-thiouridine (mnm(5)s(2)U) at the wobble position (U34) in tRNA. Catalyzes the FAD-dependent demodification of cmnm(5)s(2)U34 to nm(5)s(2)U34, followed by the transfer of a methyl group from S-adenosyl-L-methionine to nm(5)s(2)U34, to form mnm(5)s(2)U34. The protein is tRNA 5-methylaminomethyl-2-thiouridine biosynthesis bifunctional protein MnmC of Haemophilus influenzae (strain PittEE).